The sequence spans 422 residues: tRNA hydroxylation protein P (422 aa).

The first 58 residues, 1 to 58 (MNQVELLSPAGNLKKLKIALNYGADAVYGGVSHFSLRNRAGKEFTLETFKEGIDYAHA), serve as a signal peptide directing secretion.

Belongs to the peptidase U32 family.

Functionally, involved in prephenate-dependent formation of 5-hydroxyuridine (ho5U) modification at position 34 in tRNAs, the first step in 5-carboxymethoxyuridine (cmo5U) biosynthesis. This is tRNA hydroxylation protein P from Helicobacter pylori (strain ATCC 700392 / 26695) (Campylobacter pylori).